The sequence spans 387 residues: EP300-interacting inhibitor of differentiation 3 (387 aa).

Basic and acidic residues predominate over residues 1-19 (MSEEKCSLTGGEEKGEELA). The disordered stretch occupies residues 1-77 (MSEEKCSLTG…SDDLSPEAPC (77 aa)). Residues 32–72 (EEDDDDDEEALKKEEEEEEEEEEEDEEEEEEGPDSSSDDLS) show a composition bias toward acidic residues.

This sequence belongs to the NSE4 family. Component of the SMC5-SMC6 complex which consists at least of SMC5, SMC6, NSMCE2, NSMCE1, NSMCE4A or EID3 and NSMCE3. NSMCE1, NSMCE4A or EID3 and NSMCE3 probably form a subcomplex that bridges the head domains of the SMC5:SMC6 heterodimer. Homodimer, and heterodimer with EID2. Interacts with the C-terminal region of CREBBP.

The protein localises to the nucleus. Its subcellular location is the cytoplasm. It is found in the chromosome. The protein resides in the telomere. In terms of biological role, tissue-specific component of the SMC5-SMC6 complex, a complex involved in repair of DNA double-strand breaks by homologous recombination. The complex may promote sister chromatid homologous recombination by recruiting the SMC1-SMC3 cohesin complex to double-strand breaks. The complex is required for telomere maintenance via recombination and mediates sumoylation of shelterin complex (telosome) components. Functionally, acts as a repressor of nuclear receptor-dependent transcription possibly by interfering with CREBBP-dependent coactivation. May function as a coinhibitor of other CREBBP/EP300-dependent transcription factors. In Rattus norvegicus (Rat), this protein is EP300-interacting inhibitor of differentiation 3.